The primary structure comprises 260 residues: Thiazole synthase (260 aa).

Catalysis depends on Lys-96, which acts as the Schiff-base intermediate with DXP. 1-deoxy-D-xylulose 5-phosphate is bound by residues Gly-157, 183-184 (AG), and 205-206 (AS).

It belongs to the ThiG family. As to quaternary structure, homotetramer. Forms heterodimers with either ThiH or ThiS.

The protein resides in the cytoplasm. The catalysed reaction is [ThiS sulfur-carrier protein]-C-terminal-Gly-aminoethanethioate + 2-iminoacetate + 1-deoxy-D-xylulose 5-phosphate = [ThiS sulfur-carrier protein]-C-terminal Gly-Gly + 2-[(2R,5Z)-2-carboxy-4-methylthiazol-5(2H)-ylidene]ethyl phosphate + 2 H2O + H(+). Its pathway is cofactor biosynthesis; thiamine diphosphate biosynthesis. In terms of biological role, catalyzes the rearrangement of 1-deoxy-D-xylulose 5-phosphate (DXP) to produce the thiazole phosphate moiety of thiamine. Sulfur is provided by the thiocarboxylate moiety of the carrier protein ThiS. In vitro, sulfur can be provided by H(2)S. The polypeptide is Thiazole synthase (Corynebacterium glutamicum (strain R)).